The chain runs to 491 residues: NADH-quinone oxidoreductase subunit N 1 (491 aa).

Transmembrane regions (helical) follow at residues 9-29 (IAAP…LDLL), 38-58 (PMYV…VPLW), 76-96 (FAAV…LLSF), 104-124 (SGYL…GGAG), 126-146 (LMVI…MIAF), 161-181 (FVLG…IYGA), 211-231 (VGVG…PFHI), 246-266 (AFMA…LLVA), 276-296 (FLLP…TVGI), 304-324 (LMAY…PGLG), 329-349 (SAAA…FAVV), 375-395 (VGVC…TGGF), 410-432 (AWIV…LKVI), and 461-481 (VVLA…GPVS).

This sequence belongs to the complex I subunit 2 family. NDH-1 is composed of 14 different subunits. Subunits NuoA, H, J, K, L, M, N constitute the membrane sector of the complex.

Its subcellular location is the cell membrane. The catalysed reaction is a quinone + NADH + 5 H(+)(in) = a quinol + NAD(+) + 4 H(+)(out). Its function is as follows. NDH-1 shuttles electrons from NADH, via FMN and iron-sulfur (Fe-S) centers, to quinones in the respiratory chain. The immediate electron acceptor for the enzyme in this species is believed to be a menaquinone. Couples the redox reaction to proton translocation (for every two electrons transferred, four hydrogen ions are translocated across the cytoplasmic membrane), and thus conserves the redox energy in a proton gradient. This is NADH-quinone oxidoreductase subunit N 1 from Symbiobacterium thermophilum (strain DSM 24528 / JCM 14929 / IAM 14863 / T).